The following is a 334-amino-acid chain: Trans-3-hydroxy-L-proline dehydratase (334 aa).

The active-site Proton acceptor is Cys-91. Substrate-binding positions include 92 to 93 (GH), Asp-250, and 255 to 256 (GT).

This sequence belongs to the proline racemase family.

It carries out the reaction trans-3-hydroxy-L-proline = 1-pyrroline-2-carboxylate + H2O. Its function is as follows. Catalyzes the dehydration of trans-3-hydroxy-L-proline (t3LHyp) to Delta(1)-pyrroline-2-carboxylate (Pyr2C). Is likely involved in a degradation pathway that converts t3LHyp to L-proline, which allows B.cereus to grow on t3LHyp as a sole carbon source. Displays no proline racemase activity. This Bacillus cereus (strain ATCC 14579 / DSM 31 / CCUG 7414 / JCM 2152 / NBRC 15305 / NCIMB 9373 / NCTC 2599 / NRRL B-3711) protein is Trans-3-hydroxy-L-proline dehydratase.